The chain runs to 707 residues: Coiled-coil domain-containing protein 177 (707 aa).

Disordered stretches follow at residues 1–65 (MVDP…EGGR) and 183–294 (PSAG…SALT). Composition is skewed to low complexity over residues 38–49 (AASSASASASAA), 183–215 (PSAG…PSSA), and 243–258 (ALSS…YSGE). S311 is modified (phosphoserine). Residues 364–605 (GQWELQRVHA…LQHATQVAEE (242 aa)) are a coiled coil. Disordered regions lie at residues 372 to 426 (HAKQ…RSEE), 454 to 581 (KLQQ…EREH), 597 to 637 (QHAT…RDED), and 652 to 707 (ERSE…LDRK). Composition is skewed to basic and acidic residues over residues 377–392 (RERE…EQGR), 399–426 (VEER…RSEE), 454–484 (KLQQ…ERAQ), 491–514 (QRQE…RHEA), 543–581 (ENYE…EREH), 618–637 (RLEK…RDED), and 652–664 (ERSE…RRSA). A compositionally biased stretch (low complexity) spans 665 to 675 (LESARSTARAS). Residues 677–707 (HVREKVREETNTRSFDRMVREAQLHASLDRK) show a composition bias toward basic and acidic residues.

In Homo sapiens (Human), this protein is Coiled-coil domain-containing protein 177 (CCDC177).